Consider the following 146-residue polypeptide: Ribonuclease H (146 aa).

Positions 1–143 (MEKTITIYTD…CDELARLAIK (143 aa)) constitute an RNase H type-1 domain. Mg(2+) is bound by residues Asp10, Glu48, Asp70, and Asp135.

Belongs to the RNase H family. As to quaternary structure, monomer. It depends on Mg(2+) as a cofactor.

The protein localises to the cytoplasm. The enzyme catalyses Endonucleolytic cleavage to 5'-phosphomonoester.. Its function is as follows. Endonuclease that specifically degrades the RNA of RNA-DNA hybrids. The chain is Ribonuclease H from Chlorobaculum parvum (strain DSM 263 / NCIMB 8327) (Chlorobium vibrioforme subsp. thiosulfatophilum).